A 201-amino-acid polypeptide reads, in one-letter code: UPF0056 membrane protein PYRAB13050 (201 aa).

Transmembrane regions (helical) follow at residues 8–28 (FAVLYVGLFAITNPVGAVPIF), 49–69 (ITVLVTLLTFALVGKWIFKFF), 73–93 (VDAFAIAGGILLFRMGMEMLS), 111–131 (VAVIPLAIPLISGPGAITTVM), 140–160 (PIVIATIIAIGISVYIILASG), and 181–201 (LILTSMAIQMIINGIKGAFGI).

It belongs to the UPF0056 (MarC) family.

It is found in the cell membrane. The sequence is that of UPF0056 membrane protein PYRAB13050 from Pyrococcus abyssi (strain GE5 / Orsay).